The chain runs to 113 residues: Small ribosomal subunit protein bS6 (113 aa).

Belongs to the bacterial ribosomal protein bS6 family.

In terms of biological role, binds together with bS18 to 16S ribosomal RNA. The protein is Small ribosomal subunit protein bS6 of Flavobacterium psychrophilum (strain ATCC 49511 / DSM 21280 / CIP 103535 / JIP02/86).